We begin with the raw amino-acid sequence, 278 residues long: Manganese import system permease protein ScaB (278 aa).

8 helical membrane passes run 18–38, 61–81, 94–114, 134–154, 174–194, 196–216, 222–242, and 246–266; these read ALIT…FIIL, ILGI…SIII, TAIG…ISVA, LDMW…SIFF, VNFY…TAMQ, VGTI…YLYA, MILL…FIGY, and VAAG…SFFI.

It belongs to the ABC-3 integral membrane protein family. As to quaternary structure, the complex is composed of two ATP-binding proteins (ScaC), two transmembrane proteins (ScaB) and a solute-binding protein (ScaA).

It localises to the cell membrane. Part of the high-affinity ABC transporter complex ScaABC involved in manganese import. Probably responsible for the translocation of the substrate across the membrane. Essential for growth under Mn(2+)-limiting conditions. This Streptococcus gordonii protein is Manganese import system permease protein ScaB.